A 283-amino-acid polypeptide reads, in one-letter code: NAD kinase (283 aa).

The active-site Proton acceptor is the D67. Residues 67 to 68 (DG), R72, 136 to 137 (NE), K147, R164, D166, 177 to 182 (TAYSMS), and Q236 contribute to the NAD(+) site.

The protein belongs to the NAD kinase family. A divalent metal cation is required as a cofactor.

It localises to the cytoplasm. The enzyme catalyses NAD(+) + ATP = ADP + NADP(+) + H(+). Involved in the regulation of the intracellular balance of NAD and NADP, and is a key enzyme in the biosynthesis of NADP. Catalyzes specifically the phosphorylation on 2'-hydroxyl of the adenosine moiety of NAD to yield NADP. In Methanothermobacter thermautotrophicus (strain ATCC 29096 / DSM 1053 / JCM 10044 / NBRC 100330 / Delta H) (Methanobacterium thermoautotrophicum), this protein is NAD kinase.